A 324-amino-acid polypeptide reads, in one-letter code: uncharacterized protein (324 aa).

This is an uncharacterized protein from Methanocaldococcus jannaschii (strain ATCC 43067 / DSM 2661 / JAL-1 / JCM 10045 / NBRC 100440) (Methanococcus jannaschii).